An 83-amino-acid polypeptide reads, in one-letter code: ATP synthase subunit 9, mitochondrial (83 aa).

The next 2 helical transmembrane spans lie at 8–28 (IGAG…GNVL) and 45–72 (SFGY…LISS).

It belongs to the ATPase C chain family. F-type ATPases have 2 components, CF(1) - the catalytic core - and CF(0) - the membrane proton channel. CF(1) has five subunits: alpha(3), beta(3), gamma(1), delta(1), epsilon(1). CF(0) has three main subunits: a, b and c.

The protein localises to the mitochondrion membrane. Its function is as follows. This protein is one of the chains of the nonenzymatic membrane component (F0) of mitochondrial ATPase. This is ATP synthase subunit 9, mitochondrial (ATP9) from Helianthus annuus (Common sunflower).